The primary structure comprises 490 residues: Pleckstrin homology domain-containing family O member 2 (490 aa).

The PH domain maps to 18–119; it reads MVDKAGWIKK…WIKALNEGIN (102 aa). Phosphoserine occurs at positions 164 and 167. The segment at 173–402 is disordered; sequence LDLDVPDSGP…DLLGEGPRHP (230 aa). Low complexity predominate over residues 230-243; that stretch reads APTPVSASSEVSPE. Position 232 is a phosphothreonine (T232). 3 positions are modified to phosphoserine: S235, S237, and S238. The segment covering 244–257 has biased composition (acidic residues); that stretch reads SQEDSETPAEEDSG. The residue at position 273 (S273) is a Phosphoserine. Low complexity predominate over residues 277-297; sequence PSPQEAPAAESAEPSQAPCSE. 2 positions are modified to phosphothreonine: T298 and T311. Residues S390 and S468 each carry the phosphoserine modification. Residues 439–481 adopt a coiled-coil conformation; the sequence is SAETLLSQAVEQLRQATQVLQEMRDLGELSQEAPGLREKRKEL.

In Homo sapiens (Human), this protein is Pleckstrin homology domain-containing family O member 2 (PLEKHO2).